Here is a 148-residue protein sequence, read N- to C-terminus: uncharacterized protein (148 aa).

A helical transmembrane segment spans residues 7 to 29 (MLILMSLVKIVLTCLPTGVIEWL).

It localises to the membrane. This is an uncharacterized protein from Bacillus subtilis (strain 168).